Reading from the N-terminus, the 315-residue chain is MRMCDRGIQMLITTVGAFAAFSLMTIAVGTDYWLYSRGVCRTKSTSDNETSRKNEEVMTHSGLWRTCCLEGAFRGVCKKIDHFPEDADYEQDTAEYLLRAVRASSVFPILSVTLLFFGGLCVAASEFHRSRHSVILSAGIFFVSAGLSNIIGIIVYISANAGDPGQRDSKKSYSYGWSFYFGAFSFIIAEIVGVVAVHIYIEKHQQLRARSHSELLKKSTFARLPPYRYRFRRRSSSRSTEPRSRDLSPISKGFHTIPSTDISMFTLSRDPSKLTMGTLLNSDRDHAFLQFHNSTPKEFKESLHNNPANRRTTPV.

The next 4 helical transmembrane spans lie at 8–28 (IQMLITTVGAFAAFSLMTIAV), 104–124 (SSVFPILSVTLLFFGGLCVAA), 135–155 (ILSAGIFFVSAGLSNIIGIIV), and 181–201 (FGAFSFIIAEIVGVVAVHIYI). The disordered stretch occupies residues 232 to 253 (RRRSSSRSTEPRSRDLSPISKG). Serine 248 carries the post-translational modification Phosphoserine.

Belongs to the PMP-22/EMP/MP20 family. CACNG subfamily. The L-type calcium channel is composed of five subunits: alpha-1, alpha-2/delta, beta and gamma. Acts as an auxiliary subunit for AMPA-selective glutamate receptors (AMPARs). Found in a complex with GRIA1, GRIA2, GRIA3, GRIA4, CNIH2, CNIH3, CACNG2, CACNG4, CACNG5, CACNG7 and CACNG8. Interacts with AP4M1 and GRIA1; associates GRIA1 with the adaptor protein complex 4 (AP-4) to target GRIA1 to the somatodendritic compartment of neurons.

The protein resides in the membrane. Its function is as follows. Regulates the trafficking to the somatodendritic compartment and gating properties of AMPA-selective glutamate receptors (AMPARs). Promotes their targeting to the cell membrane and synapses and modulates their gating properties by slowing their rates of activation, deactivation and desensitization. Does not show subunit-specific AMPA receptor regulation and regulates all AMPAR subunits. Thought to stabilize the calcium channel in an inactivated (closed) state. This Mus musculus (Mouse) protein is Voltage-dependent calcium channel gamma-3 subunit (Cacng3).